The sequence spans 329 residues: GTP 3',8-cyclase (329 aa).

Residues 8 to 234 (AFARKFYYLR…QLRQRSDGPA (227 aa)) form the Radical SAM core domain. GTP is bound at residue arginine 17. [4Fe-4S] cluster-binding residues include cysteine 24 and cysteine 28. Tyrosine 30 is an S-adenosyl-L-methionine binding site. Cysteine 31 lines the [4Fe-4S] cluster pocket. Arginine 68 is a GTP binding site. Residue glycine 72 participates in S-adenosyl-L-methionine binding. Threonine 99 lines the GTP pocket. Serine 123 lines the S-adenosyl-L-methionine pocket. Lysine 160 provides a ligand contact to GTP. Methionine 194 contacts S-adenosyl-L-methionine. 2 residues coordinate [4Fe-4S] cluster: cysteine 257 and cysteine 260. Residue 262 to 264 (RLR) coordinates GTP. Cysteine 274 contacts [4Fe-4S] cluster.

It belongs to the radical SAM superfamily. MoaA family. As to quaternary structure, monomer and homodimer. The cofactor is [4Fe-4S] cluster.

It carries out the reaction GTP + AH2 + S-adenosyl-L-methionine = (8S)-3',8-cyclo-7,8-dihydroguanosine 5'-triphosphate + 5'-deoxyadenosine + L-methionine + A + H(+). It functions in the pathway cofactor biosynthesis; molybdopterin biosynthesis. Its function is as follows. Catalyzes the cyclization of GTP to (8S)-3',8-cyclo-7,8-dihydroguanosine 5'-triphosphate. This is GTP 3',8-cyclase from Shigella sonnei (strain Ss046).